The chain runs to 420 residues: Nucleoporin NUP42 (420 aa).

A C3H1-type zinc finger spans residues 1-25; that stretch reads MTICQFFLQGRCRFGDRCWNEHPGA. The stretch at 14-15 is one FG 1 repeat; sequence FG. The interval 25–111 is disordered; sequence ARGAGGARQP…FASPLSDEQK (87 aa). Residues 42–67 show a composition bias toward polar residues; that stretch reads SGNNRRGWNASSQRYSNVIQPSSFPK. FG repeat units lie at residues 82–83, 95–96, 218–219, 220–221, 228–229, 265–266, 271–272, 288–289, 345–346, and 364–365; these read FG. Positions 87–102 are enriched in polar residues; sequence SGASTSRGFGSSQNPF. The tract at residues 323-345 is disordered; the sequence is MAASPSGSTTAPPLRSGSSVVGF. Residues 365 to 420 are interaction with GLE1; sequence GGSGISTSVLASGAADNALFTPRDQLMKEELEQFQSQRFTLGKIPLKPPPVELLTV.

As to quaternary structure, probable component of the nuclear pore complex (NPC). Interacts with nuclear export protein NXF1. Interacts with GLE1. Able to form a heterotrimer with NUP155 and GLE1 in vitro. Interacts with XPO1. Post-translationally, O-glycosylated.

Its subcellular location is the nucleus. The protein resides in the nuclear pore complex. It is found in the nucleus membrane. Its function is as follows. Required for the export of mRNAs containing poly(A) tails from the nucleus into the cytoplasm. The sequence is that of Nucleoporin NUP42 (Nup42) from Mus musculus (Mouse).